Consider the following 103-residue polypeptide: MAIQGIESVMQAMQTAALQASGSKTDDASSADFGAEMKAALNKISETQTAARSQAQAFEMGKEGVSLNDVMVDLQKSSVSMQMGIQVRNKLVSAYSDIMNMQV.

The protein belongs to the FliE family.

Its subcellular location is the bacterial flagellum basal body. The chain is Flagellar hook-basal body complex protein FliE from Erwinia tasmaniensis (strain DSM 17950 / CFBP 7177 / CIP 109463 / NCPPB 4357 / Et1/99).